Consider the following 262-residue polypeptide: Acyl-[acyl-carrier-protein]--UDP-N-acetylglucosamine O-acyltransferase (262 aa).

The protein belongs to the transferase hexapeptide repeat family. LpxA subfamily. In terms of assembly, homotrimer.

The protein resides in the cytoplasm. It catalyses the reaction a (3R)-hydroxyacyl-[ACP] + UDP-N-acetyl-alpha-D-glucosamine = a UDP-3-O-[(3R)-3-hydroxyacyl]-N-acetyl-alpha-D-glucosamine + holo-[ACP]. It participates in glycolipid biosynthesis; lipid IV(A) biosynthesis; lipid IV(A) from (3R)-3-hydroxytetradecanoyl-[acyl-carrier-protein] and UDP-N-acetyl-alpha-D-glucosamine: step 1/6. Involved in the biosynthesis of lipid A, a phosphorylated glycolipid that anchors the lipopolysaccharide to the outer membrane of the cell. This Herminiimonas arsenicoxydans protein is Acyl-[acyl-carrier-protein]--UDP-N-acetylglucosamine O-acyltransferase.